A 155-amino-acid polypeptide reads, in one-letter code: Microsomal glutathione S-transferase 1 (155 aa).

The Lumenal segment spans residues 3–9 (DLRQLMD). Residues 10-33 (NEVLMAFTSYATIILTKMMFMSSA) form a helical membrane-spanning segment. The Cytoplasmic portion of the chain corresponds to 34–62 (TAFQRITNKVFANPEDCAGFGKGENAKKF). Arg-38 serves as a coordination point for glutathione. N6-acetyllysine is present on residues Lys-42, Lys-55, and Lys-60. The chain crosses the membrane as a helical span at residues 63 to 96 (VRTDEKVERVRRAHLNDLENIVPFLGIGLLYSLS). Residues Arg-73, Arg-74, His-76, and Glu-81 each coordinate glutathione. The Lumenal portion of the chain corresponds to 97–99 (GPD). A helical transmembrane segment spans residues 100–123 (LSTALMHFRIFVGARIYHTIAYLT). Residue Tyr-121 coordinates glutathione. Topologically, residues 124–128 (PLPQP) are cytoplasmic. Residues 129–148 (NRGLAFFVGYGVTLSMAYRL) traverse the membrane as a helical segment. Over 149 to 155 (LRSRLYL) the chain is Lumenal.

It belongs to the MAPEG family. In terms of assembly, homotrimer; The trimer binds only one molecule of glutathione. Acetylation of Lys-42 and Lys-55 is observed in liver mitochondria from fasted mice but not from fed mice. In terms of tissue distribution, expressed in the testes (at protein level).

The protein resides in the endoplasmic reticulum membrane. The protein localises to the mitochondrion outer membrane. It carries out the reaction RX + glutathione = an S-substituted glutathione + a halide anion + H(+). Its function is as follows. Conjugation of reduced glutathione to a wide number of exogenous and endogenous hydrophobic electrophiles. This Mus musculus (Mouse) protein is Microsomal glutathione S-transferase 1 (Mgst1).